The chain runs to 453 residues: Protein IVY1 (453 aa).

The segment covering 1-16 (MPDNNTEQLQGSPSSD) has biased composition (polar residues). Residues 1-20 (MPDNNTEQLQGSPSSDQRLR) are disordered. 3 positions are modified to phosphoserine: Ser59, Ser84, and Ser85. Coiled coils occupy residues 102–122 (KRDV…SNAY) and 230–257 (IRNL…KHDF). Disordered regions lie at residues 316–340 (DGPY…EETG) and 353–453 (TSQP…SSNI). Position 335 is a phosphoserine (Ser335). Residues 353-371 (TSQPSTSKTSLPKSKGSST) are compositionally biased toward low complexity. Composition is skewed to polar residues over residues 372–384 (VSTP…SSNK) and 404–429 (LMGT…TFKQ). Residues 431 to 442 (SIKEDNDNHSSD) are compositionally biased toward basic and acidic residues. The segment covering 443–453 (TDGMQDQSSNI) has biased composition (polar residues).

As to quaternary structure, homomultimer. Interacts with YPT7 and VPS33.

The protein resides in the vacuole membrane. In terms of biological role, may be required for vacuolar fusion. Overexpression leads to fragmentation of vacuoles, missorting of the vacuolar enzyme carboxypeptidase Y (CPY) to the exterior of the cell and accumulation of multivesicular bodies inside the cell. The chain is Protein IVY1 (IVY1) from Saccharomyces cerevisiae (strain ATCC 204508 / S288c) (Baker's yeast).